The sequence spans 119 residues: Large ribosomal subunit protein uL24 (119 aa).

Belongs to the universal ribosomal protein uL24 family. In terms of assembly, part of the 50S ribosomal subunit.

Its function is as follows. One of two assembly initiator proteins, it binds directly to the 5'-end of the 23S rRNA, where it nucleates assembly of the 50S subunit. Functionally, located at the polypeptide exit tunnel on the outside of the subunit. This Methanococcus maripaludis (strain C5 / ATCC BAA-1333) protein is Large ribosomal subunit protein uL24.